A 122-amino-acid polypeptide reads, in one-letter code: Large ribosomal subunit protein uL14c (122 aa).

This sequence belongs to the universal ribosomal protein uL14 family. As to quaternary structure, part of the 50S ribosomal subunit.

It is found in the plastid. The protein localises to the chloroplast. In terms of biological role, binds to 23S rRNA. This chain is Large ribosomal subunit protein uL14c, found in Cryptomeria japonica (Japanese cedar).